A 238-amino-acid polypeptide reads, in one-letter code: IkB-like protein (238 aa).

ANK repeat units follow at residues 48–77 (GSSV…PGEI), 86–115 (DGNS…KNGT), 123–152 (NGMT…DPTQ), and 157–187 (RGFT…PLYM). The Nuclear localization signal signature appears at 80-86 (PHRRDKD). The Nuclear localization signal motif lies at 202–213 (KKKPKIIITGCK). The PxIxITxC motif; Interaction with host PPP3CA signature appears at 205–212 (PKIIITGC). The FLCV motif signature appears at 227–230 (FLCV).

The protein belongs to the asfivirus A238L family. In terms of assembly, interacts with host PPIA. Interacts with host PPP3CA/Calcineurin. Interacts with host RELA/p65; interaction of the 32 kDa form with host RELA results in the formation of a stable complex with NF-kappa-B. Interacts with host PPP3R1. Interacts with host EP300; this interaction inhibits the association of host EP300 with host RELA, JUN and NFATC2. Post-translationally, the protein exists in a 28 kDa and a 32 kDa form, probably due to post-translational modifications which are neither phosphorylation, nor sumoylation.

The protein localises to the host nucleus. It localises to the host cytoplasm. I-kappa-B- (IkB)-like protein that inhibits the binding of NF-kappa-B to DNA, thereby down-regulating pro-inflammatory cytokine production. Forms a heterodimer with the NF-kappa-B subunit RELA/p65 and prevents the activation of the NF-kappa-B transcription factor. Also inhibits the host calcineurin phosphatase activity, which is required for the induction of nuclear factor of activated T cells(NFAT)-dependent immune response genes. Inhibits calcineurin function, which is required for the induction of nuclear factor of activated T cells (NFAT)-dependent immune response genes. Prevents the binding of substrates to calcineurin without affecting the phosphatase activity. Does not contain the serine residues that are phosphorylated by host IkB kinase and thus is not degraded following stimulation of the NFkB pathway. This African swine fever virus (strain Badajoz 1971 Vero-adapted) (Ba71V) protein is IkB-like protein (A238L).